Reading from the N-terminus, the 390-residue chain is Transforming growth factor beta-1 proprotein (390 aa).

The signal sequence occupies residues 1–29 (MPPSGLRLLPLLLPLPWLLVLTPGRPAAG). Residues 30–74 (LSTCKTIDMELVKRKRIEAIRGQILSKLRLASPPSQGEVPPGPLP) form a straightjacket domain region. Positions 75-271 (EAVLALYNST…ATPLERAQHL (197 aa)) are arm domain. N-linked (GlcNAc...) asparagine glycans are attached at residues Asn82, Asn136, and Asn176. Residues 226–252 (DSKDNKLHVEINGISPKRRGDLGTIHD) are bowtie tail. The short motif at 244 to 246 (RGD) is the Cell attachment site element. 4 cysteine pairs are disulfide-bonded: Cys285–Cys294, Cys293–Cys356, Cys322–Cys387, and Cys326–Cys389.

It belongs to the TGF-beta family. Homodimer; disulfide-linked. Interacts with the serine proteases, HTRA1 and HTRA3: the interaction with either inhibits TGFB1-mediated signaling and the HTRA protease activity is required for this inhibition. May interact with THSD4; this interaction may lead to sequestration by FBN1 microfibril assembly and attenuation of TGFB signaling. Interacts with CD109, DPT and ASPN. Interacts with EFEMP2. Interacts with TSKU; the interaction contributes to regulation of the hair cycle. Interacts with TGFBR3. As to quaternary structure, homodimer; disulfide-linked. Interacts with transforming growth factor beta-1 (TGF-beta-1) chain; interaction is non-covalent and maintains TGF-beta-1 in a latent state; each latency-associated peptide (LAP) monomer interacts with TGF-beta-1 in the other monomer. Interacts with LTBP1; leading to regulation of TGF-beta-1 activation. Interacts with LRRC32/GARP; leading to regulation of TGF-beta-1 activation on the surface of activated regulatory T-cells (Tregs). Interacts with LRRC33/NRROS; leading to regulation of TGF-beta-1 activation in macrophages and microglia. Interacts (via cell attachment site) with integrins ITGAV and ITGB6 (ITGAV:ITGB6), leading to release of the active TGF-beta-1. Interacts with NREP; the interaction results in a decrease in TGFB1 autoinduction. Interacts with HSP90AB1; inhibits latent TGFB1 activation. In terms of assembly, homodimer; disulfide-linked. Interacts with TGF-beta receptors (TGFBR1 and TGFBR2), leading to signal transduction. Transforming growth factor beta-1 proprotein: The precursor proprotein is cleaved in the Golgi apparatus by FURIN to form Transforming growth factor beta-1 (TGF-beta-1) and Latency-associated peptide (LAP) chains, which remain non-covalently linked, rendering TGF-beta-1 inactive. In terms of processing, N-glycosylated. Deglycosylation leads to activation of Transforming growth factor beta-1 (TGF-beta-1); mechanisms triggering deglycosylation-driven activation of TGF-beta-1 are however unclear. In terms of tissue distribution, expressed in cardiomyocytes. Weakly expressed in the mammary glands, with a slight increase of expression following onset of involution.

It localises to the secreted. The protein localises to the extracellular space. Its subcellular location is the extracellular matrix. Functionally, transforming growth factor beta-1 proprotein: Precursor of the Latency-associated peptide (LAP) and Transforming growth factor beta-1 (TGF-beta-1) chains, which constitute the regulatory and active subunit of TGF-beta-1, respectively. Its function is as follows. Required to maintain the Transforming growth factor beta-1 (TGF-beta-1) chain in a latent state during storage in extracellular matrix. Associates non-covalently with TGF-beta-1 and regulates its activation via interaction with 'milieu molecules', such as LTBP1, LRRC32/GARP and LRRC33/NRROS, that control activation of TGF-beta-1. Interaction with LRRC33/NRROS regulates activation of TGF-beta-1 in macrophages and microglia. Interaction with LRRC32/GARP controls activation of TGF-beta-1 on the surface of activated regulatory T-cells (Tregs). Interaction with integrins (ITGAV:ITGB6 or ITGAV:ITGB8) results in distortion of the Latency-associated peptide chain and subsequent release of the active TGF-beta-1. Multifunctional protein that regulates the growth and differentiation of various cell types and is involved in various processes, such as normal development, immune function, microglia function and responses to neurodegeneration. Activation into mature form follows different steps: following cleavage of the proprotein in the Golgi apparatus, Latency-associated peptide (LAP) and Transforming growth factor beta-1 (TGF-beta-1) chains remain non-covalently linked rendering TGF-beta-1 inactive during storage in extracellular matrix. At the same time, LAP chain interacts with 'milieu molecules', such as LTBP1, LRRC32/GARP and LRRC33/NRROS that control activation of TGF-beta-1 and maintain it in a latent state during storage in extracellular milieus. TGF-beta-1 is released from LAP by integrins (ITGAV:ITGB6 or ITGAV:ITGB8): integrin-binding to LAP stabilizes an alternative conformation of the LAP bowtie tail and results in distortion of the LAP chain and subsequent release of the active TGF-beta-1. Once activated following release of LAP, TGF-beta-1 acts by binding to TGF-beta receptors (TGFBR1 and TGFBR2), which transduce signal. While expressed by many cells types, TGF-beta-1 only has a very localized range of action within cell environment thanks to fine regulation of its activation by Latency-associated peptide chain (LAP) and 'milieu molecules'. Plays an important role in bone remodeling: acts as a potent stimulator of osteoblastic bone formation, causing chemotaxis, proliferation and differentiation in committed osteoblasts. Can promote either T-helper 17 cells (Th17) or regulatory T-cells (Treg) lineage differentiation in a concentration-dependent manner. At high concentrations, leads to FOXP3-mediated suppression of RORC and down-regulation of IL-17 expression, favoring Treg cell development. At low concentrations in concert with IL-6 and IL-21, leads to expression of the IL-17 and IL-23 receptors, favoring differentiation to Th17 cells. Stimulates sustained production of collagen through the activation of CREB3L1 by regulated intramembrane proteolysis (RIP). Mediates SMAD2/3 activation by inducing its phosphorylation and subsequent translocation to the nucleus. Positively regulates odontoblastic differentiation in dental papilla cells, via promotion of IPO7-mediated translocation of phosphorylated SMAD2 to the nucleus and subsequent transcription of target genes. Can induce epithelial-to-mesenchymal transition (EMT) and cell migration in various cell types. This Mus musculus (Mouse) protein is Transforming growth factor beta-1 proprotein.